A 284-amino-acid polypeptide reads, in one-letter code: Shikimate dehydrogenase (NADP(+)) (284 aa).

Shikimate is bound by residues S20 to S22 and S67. Catalysis depends on K71, which acts as the Proton acceptor. Position 83 (D83) interacts with NADP(+). The shikimate site is built by N92 and D107. NADP(+) is bound by residues G129–A133 and I227. Y229 provides a ligand contact to shikimate. G250 lines the NADP(+) pocket.

Belongs to the shikimate dehydrogenase family. Homodimer.

The enzyme catalyses shikimate + NADP(+) = 3-dehydroshikimate + NADPH + H(+). Its pathway is metabolic intermediate biosynthesis; chorismate biosynthesis; chorismate from D-erythrose 4-phosphate and phosphoenolpyruvate: step 4/7. Its function is as follows. Involved in the biosynthesis of the chorismate, which leads to the biosynthesis of aromatic amino acids. Catalyzes the reversible NADPH linked reduction of 3-dehydroshikimate (DHSA) to yield shikimate (SA). The chain is Shikimate dehydrogenase (NADP(+)) from Streptococcus pneumoniae (strain CGSP14).